The following is a 388-amino-acid chain: F-box protein At5g42460 (388 aa).

The region spanning 1–47 (MTIMSDLPRDLLAEILSRVPLTSLRAVRLTCKKWNDLSKDRSFLKKQ) is the F-box domain.

The polypeptide is F-box protein At5g42460 (Arabidopsis thaliana (Mouse-ear cress)).